Consider the following 53-residue polypeptide: VSVDCSEYPQPTCTTEHRPVCGSNNETYGNKCNFCNAVVKSNGTLTVSHFGKC.

In terms of domain architecture, Kazal-like spans 3–53 (VDCSEYPQPTCTTEHRPVCGSNNETYGNKCNFCNAVVKSNGTLTVSHFGKC). 3 cysteine pairs are disulfide-bonded: Cys-5–Cys-35, Cys-13–Cys-32, and Cys-21–Cys-53. The N-linked (GlcNAc...) asparagine glycan is linked to Asn-42.

It localises to the secreted. In Polyplectron bicalcaratum (Grey peacock-pheasant), this protein is Ovomucoid.